Consider the following 331-residue polypeptide: DSC E3 ubiquitin ligase complex subunit D (331 aa).

Residue N26 is glycosylated (N-linked (GlcNAc...) asparagine). 3 helical membrane-spanning segments follow: residues 63 to 83 (ILIYCELSALYYMDCSVILFA), 107 to 127 (PFIGAIFVSNIFCMIFHNFFT), and 159 to 179 (LFLLDFLVLILDLVMLGLIVE). Residues 197–214 (VQDHDSEERGVHRTRPES) are compositionally biased toward basic and acidic residues. Residues 197-225 (VQDHDSEERGVHRTRPESRSSVVGAELDE) are disordered.

Component of the DSC E3 ubiquitin ligase complex composed of dscA, dscB, dscC and dscD.

Its subcellular location is the endoplasmic reticulum membrane. The protein operates within protein modification; protein ubiquitination. In terms of biological role, component of the DSC E3 ubiquitin ligase complex which is required for the srbA transcriptional activator proteolytic cleavage to release the soluble transcription factor from the membrane in low oxygen or sterol conditions. Required for growth during hypoxia and triazole drug susceptibility, as well as for virulence in a murine model of invasive pulmonary aspergillosis (IPA). This is DSC E3 ubiquitin ligase complex subunit D from Aspergillus fumigatus (strain CBS 144.89 / FGSC A1163 / CEA10) (Neosartorya fumigata).